A 253-amino-acid polypeptide reads, in one-letter code: Probable glutathione transferase omega-2 (253 aa).

Positions 25–105 (GIYRIYNMRF…YLDDLFPESR (81 aa)) constitute a GST N-terminal domain. Cys-35 functions as the Nucleophile in the catalytic mechanism. Residues Lys-62, Val-75, and 89 to 90 (ES) contribute to the glutathione site. A GST C-terminal domain is found at 110-238 (DPYEKVQQKL…SQPTEMGVGF (129 aa)).

This sequence belongs to the GST superfamily. Omega family.

The catalysed reaction is RX + glutathione = an S-substituted glutathione + a halide anion + H(+). It catalyses the reaction L-dehydroascorbate + 2 glutathione = glutathione disulfide + L-ascorbate. It carries out the reaction methylarsonate + 2 glutathione + H(+) = methylarsonous acid + glutathione disulfide + H2O. Functionally, exhibits glutathione-dependent thiol transferase activity. Has dehydroascorbate reductase activity and may contribute to the recycling of ascorbic acid. Participates in the biotransformation of inorganic arsenic and reduces monomethylarsonic acid (MMA). The chain is Probable glutathione transferase omega-2 from Caenorhabditis briggsae.